A 119-amino-acid chain; its full sequence is UPF0342 protein Athe_0692 (119 aa).

It belongs to the UPF0342 family.

This is UPF0342 protein Athe_0692 from Caldicellulosiruptor bescii (strain ATCC BAA-1888 / DSM 6725 / KCTC 15123 / Z-1320) (Anaerocellum thermophilum).